A 193-amino-acid polypeptide reads, in one-letter code: Epididymal-specific lipocalin-12 (193 aa).

An N-terminal signal peptide occupies residues 1 to 19; sequence MGPWWALWLILTLPQILGG. A disulfide bridge connects residues Cys-88 and Cys-193. N-linked (GlcNAc...) asparagine glycans are attached at residues Asn-143 and Asn-172.

It belongs to the calycin superfamily. Lipocalin family. As to quaternary structure, monomer.

The protein localises to the secreted. Binds all-trans retinoic acid and may act as a retinoid carrier protein within the epididymis. May play a role in male fertility. The sequence is that of Epididymal-specific lipocalin-12 (Lcn12) from Rattus norvegicus (Rat).